The primary structure comprises 294 residues: 4-hydroxy-tetrahydrodipicolinate synthase (294 aa).

Thr47 provides a ligand contact to pyruvate. The Proton donor/acceptor role is filled by Tyr135. The active-site Schiff-base intermediate with substrate is the Lys163. Thr205 contacts pyruvate.

This sequence belongs to the DapA family. In terms of assembly, homotetramer; dimer of dimers.

Its subcellular location is the cytoplasm. It catalyses the reaction L-aspartate 4-semialdehyde + pyruvate = (2S,4S)-4-hydroxy-2,3,4,5-tetrahydrodipicolinate + H2O + H(+). Its pathway is amino-acid biosynthesis; L-lysine biosynthesis via DAP pathway; (S)-tetrahydrodipicolinate from L-aspartate: step 3/4. In terms of biological role, catalyzes the condensation of (S)-aspartate-beta-semialdehyde [(S)-ASA] and pyruvate to 4-hydroxy-tetrahydrodipicolinate (HTPA). This Rickettsia peacockii (strain Rustic) protein is 4-hydroxy-tetrahydrodipicolinate synthase.